Consider the following 261-residue polypeptide: Global transcriptional regulator CodY (261 aa).

The tract at residues 1 to 159 (MPNLLEKTRK…ASTVVGIQLL (159 aa)) is GAF domain. Residues 207–226 (ASVIADRIGITRSVIVNALR) constitute a DNA-binding region (H-T-H motif).

This sequence belongs to the CodY family.

Its subcellular location is the cytoplasm. In terms of biological role, DNA-binding global transcriptional regulator which is involved in the adaptive response to starvation and acts by directly or indirectly controlling the expression of numerous genes in response to nutrient availability. During rapid exponential growth, CodY is highly active and represses genes whose products allow adaptation to nutrient depletion. The polypeptide is Global transcriptional regulator CodY (Streptococcus agalactiae serotype Ia (strain ATCC 27591 / A909 / CDC SS700)).